Consider the following 72-residue polypeptide: DNA-directed RNA polymerase subunit omega (72 aa).

The protein belongs to the RNA polymerase subunit omega family. In terms of assembly, the RNAP catalytic core consists of 2 alpha, 1 beta, 1 beta' and 1 omega subunit. When a sigma factor is associated with the core the holoenzyme is formed, which can initiate transcription.

It catalyses the reaction RNA(n) + a ribonucleoside 5'-triphosphate = RNA(n+1) + diphosphate. Functionally, promotes RNA polymerase assembly. Latches the N- and C-terminal regions of the beta' subunit thereby facilitating its interaction with the beta and alpha subunits. The sequence is that of DNA-directed RNA polymerase subunit omega from Laribacter hongkongensis (strain HLHK9).